Reading from the N-terminus, the 549-residue chain is MAKDLRFNVEARRLLEAGVNALADAVKVTLGPKGRNAVIEKLTGPPTITNDGVTIAREIQLRNPFANMGAQLVKEVATKTNGTAGDGTTTATVLAQALVREGLHAVDGGANPMFLKNGIEAAVAALLEEFEKYRGEVEGEADLARVATLAANNDARIGDVVAAALGRVGCDGVVTVEESPIFGLEVSFVDGIELDNGYLSPYMVTDTERMEAAYTDPYILLTNEKISQVQTLMPVLELVTRAGGQLIVFAENVEGPALGMLVANNVHGTFRSAVVRAPGFGHRRLAELNDLAVFLGGQVITADAGLSLDRVTLGQLGRCKKATITEHATTIVDGAGSATEIHARIDQLKRELERAENPHDQDTLQTRIARLSGGVAVIRVGAVTGVELKEKLHRVEDSLAAARAALAEGVVAGGGTALLQAASALDKLTLTGDAAEGREIVRRAIAEPLRWIAINAGYDGDEVVKRVAELPRGHGFNAATGEYGEMAGFGVIDPVKVTRCALQSAASIAALLLTTETLVVEEVIGNPGAVIAPGFGDLAEGLVRPSNIA.

ATP contacts are provided by residues 29 to 32 (TLGP), 86 to 90 (DGTTT), G414, 477 to 479 (NAA), and D493.

Belongs to the chaperonin (HSP60) family. Forms a cylinder of 14 subunits composed of two heptameric rings stacked back-to-back. Interacts with the co-chaperonin GroES.

Its subcellular location is the cytoplasm. It carries out the reaction ATP + H2O + a folded polypeptide = ADP + phosphate + an unfolded polypeptide.. Functionally, together with its co-chaperonin GroES, plays an essential role in assisting protein folding. The GroEL-GroES system forms a nano-cage that allows encapsulation of the non-native substrate proteins and provides a physical environment optimized to promote and accelerate protein folding. This chain is Chaperonin GroEL 3, found in Frankia casuarinae (strain DSM 45818 / CECT 9043 / HFP020203 / CcI3).